The following is a 167-amino-acid chain: Large ribosomal subunit protein bL9 (167 aa).

This sequence belongs to the bacterial ribosomal protein bL9 family.

Its function is as follows. Binds to the 23S rRNA. The sequence is that of Large ribosomal subunit protein bL9 from Chlamydia muridarum (strain MoPn / Nigg).